Here is a 442-residue protein sequence, read N- to C-terminus: Small RNA 2'-O-methyltransferase (442 aa).

The S-adenosyl-L-methionine site is built by Gly-125 and Asp-151. Mg(2+) is bound by residues Glu-209, Glu-212, His-213, and His-260.

This sequence belongs to the methyltransferase superfamily. HEN1 family. The cofactor is Mg(2+). Broadly expressed in the germline and somatic tissues in both hermaphrodites and males.

It localises to the cytoplasm. The protein resides in the nucleus. It is found in the nucleoplasm. The protein localises to the cytoplasmic granule. It catalyses the reaction small RNA 3'-end nucleotide + S-adenosyl-L-methionine = small RNA 3'-end 2'-O-methylnucleotide + S-adenosyl-L-homocysteine + H(+). Methyltransferase that adds a 2'-O-methyl group at the 3'-end of PIWI-interacting RNAs (piRNAs) and small interfering RNAs (siRNAs) which are classes of regulatory RNAs that are involved in gene silencing in endogenous RNA interference (RNAi) pathways. Methylation protects the 3'-end of small RNAs from tailing and trimming and could constitute a recognition signal for appropriate argonaute machineries. Methylates and stabilizes 26G-siRNAs (a class of 26 nucleotide siRNAs that possess a monophosphorylated guanine residue at the 5'-end) when they are bound by argonaute protein ergo-1. This occurs in the female germline and embryo, but not in the male germline. Does not methylate 26G-siRNAs bound by argonaute proteins alg-3 or alg-4. Methylates and stabilizes 21U-piRNAs, which are a class of 21 nucleotide piRNAs that possess a uracil residue at the 5'-end, in the male and female germline. In addition, may play a role in exogenous RNAi (exoRNAi) pathways in the germline. The sequence is that of Small RNA 2'-O-methyltransferase from Caenorhabditis elegans.